A 478-amino-acid chain; its full sequence is Noelin-3 (478 aa).

The N-terminal stretch at 1–23 is a signal peptide; it reads MSAPLLKLGAVLSTMAMISNWMS. Asparagine 33, asparagine 95, asparagine 179, asparagine 299, and asparagine 465 each carry an N-linked (GlcNAc...) asparagine glycan. A coiled-coil region spans residues 77–217; that stretch reads CSRDAKSRQL…TRLRDCMKKL (141 aa). In terms of domain architecture, Olfactomedin-like spans 218–470; sequence TCGKLMKITG…QVLFNVTLFH (253 aa). The cysteines at positions 219 and 401 are disulfide-linked.

Peripherally associated with AMPAR complex. AMPAR complex consists of an inner core made of 4 pore-forming GluA/GRIA proteins (GRIA1, GRIA2, GRIA3 and GRIA4) and 4 major auxiliary subunits arranged in a twofold symmetry. One of the two pairs of distinct binding sites is occupied either by CNIH2, CNIH3 or CACNG2, CACNG3. The other harbors CACNG2, CACNG3, CACNG4, CACNG8 or GSG1L. This inner core of AMPAR complex is complemented by outer core constituents binding directly to the GluA/GRIA proteins at sites distinct from the interaction sites of the inner core constituents. Outer core constituents include at least PRRT1, PRRT2, CKAMP44/SHISA9, FRRS1L and NRN1. The proteins of the inner and outer core serve as a platform for other, more peripherally associated AMPAR constituents, including OLFM3. Alone or in combination, these auxiliary subunits control the gating and pharmacology of the AMPAR complex and profoundly impact their biogenesis and protein processing. Homodimer. Interacts with MYOC. Interacts with OLFM2. In terms of tissue distribution, expressed in the brain (at protein level). Also expressed in the retina, mainly in the ganglion cell layer and in the amacrine cell subregion of the inner nuclear layer. Expressed at high levels in the epithelial cells of the posterior iris and the ciliary body and, at lower levels, in the trabecular meshwork. Isoform 2 preferentially expressed in retina and brain, while isoform 1 preferentially expressed in the tissues of the eye angle.

It is found in the secreted. The protein localises to the synapse. This is Noelin-3 (Olfm3) from Rattus norvegicus (Rat).